Here is a 31-residue protein sequence, read N- to C-terminus: Conotoxin pc6d (31 aa).

3 cysteine pairs are disulfide-bonded: C2–C20, C9–C25, and C19–C29.

It belongs to the conotoxin O1 superfamily. As to expression, expressed by the venom duct.

It localises to the secreted. In Conus pictus (Cone snail), this protein is Conotoxin pc6d.